Reading from the N-terminus, the 117-residue chain is DNA-binding protein RdgB (117 aa).

The H-T-H motif DNA-binding region spans 82 to 102 (NHSALAKKYNVSLQWIYKIVR).

The protein belongs to the c/mor transcriptional regulatory family.

In terms of biological role, regulates pectin lyase production in response to DNA damage. The sequence is that of DNA-binding protein RdgB (rdgB) from Pectobacterium carotovorum subsp. carotovorum (Erwinia carotovora subsp. carotovora).